The chain runs to 86 residues: Large ribosomal subunit protein bL31B (86 aa).

It belongs to the bacterial ribosomal protein bL31 family. Type B subfamily. As to quaternary structure, part of the 50S ribosomal subunit.

This chain is Large ribosomal subunit protein bL31B, found in Vibrio vulnificus (strain CMCP6).